Reading from the N-terminus, the 346-residue chain is Putative agmatine deiminase (346 aa).

Cys-338 serves as the catalytic Amidino-cysteine intermediate.

Belongs to the agmatine deiminase family.

It carries out the reaction agmatine + H2O = N-carbamoylputrescine + NH4(+). This chain is Putative agmatine deiminase, found in Streptomyces avermitilis (strain ATCC 31267 / DSM 46492 / JCM 5070 / NBRC 14893 / NCIMB 12804 / NRRL 8165 / MA-4680).